A 130-amino-acid chain; its full sequence is Small ribosomal subunit protein uS11c (130 aa).

Belongs to the universal ribosomal protein uS11 family. As to quaternary structure, part of the 30S ribosomal subunit.

The protein localises to the plastid. Its subcellular location is the chloroplast. The sequence is that of Small ribosomal subunit protein uS11c from Marsilea quadrifolia (European water clover).